The chain runs to 168 residues: Peptide deformylase (168 aa).

C92 and H134 together coordinate Fe cation. E135 is an active-site residue. H138 is a Fe cation binding site.

It belongs to the polypeptide deformylase family. It depends on Fe(2+) as a cofactor.

The catalysed reaction is N-terminal N-formyl-L-methionyl-[peptide] + H2O = N-terminal L-methionyl-[peptide] + formate. Functionally, removes the formyl group from the N-terminal Met of newly synthesized proteins. Requires at least a dipeptide for an efficient rate of reaction. N-terminal L-methionine is a prerequisite for activity but the enzyme has broad specificity at other positions. This chain is Peptide deformylase, found in Stutzerimonas stutzeri (strain A1501) (Pseudomonas stutzeri).